We begin with the raw amino-acid sequence, 198 residues long: Ribonuclease HII (198 aa).

Residues 10 to 198 (HLVAGVDEVG…PVKRALGLVS (189 aa)) enclose the RNase H type-2 domain. 3 residues coordinate a divalent metal cation: aspartate 16, glutamate 17, and aspartate 108.

It belongs to the RNase HII family. Mn(2+) is required as a cofactor. It depends on Mg(2+) as a cofactor.

It is found in the cytoplasm. It carries out the reaction Endonucleolytic cleavage to 5'-phosphomonoester.. In terms of biological role, endonuclease that specifically degrades the RNA of RNA-DNA hybrids. The protein is Ribonuclease HII of Salmonella paratyphi A (strain AKU_12601).